A 398-amino-acid chain; its full sequence is Phosphoglycerate kinase (398 aa).

Substrate is bound by residues 23–25 (DFN), Arg-38, 61–64 (HMGK), Arg-122, and Arg-155. ATP is bound by residues Lys-206, Gly-297, Glu-328, and 354 to 357 (GGDS).

This sequence belongs to the phosphoglycerate kinase family. Monomer.

The protein localises to the cytoplasm. It carries out the reaction (2R)-3-phosphoglycerate + ATP = (2R)-3-phospho-glyceroyl phosphate + ADP. Its pathway is carbohydrate degradation; glycolysis; pyruvate from D-glyceraldehyde 3-phosphate: step 2/5. This Clostridium botulinum (strain Okra / Type B1) protein is Phosphoglycerate kinase.